Here is an 87-residue protein sequence, read N- to C-terminus: Small ribosomal subunit protein uS15c (87 aa).

This sequence belongs to the universal ribosomal protein uS15 family. Part of the 30S ribosomal subunit.

The protein localises to the plastid. It is found in the chloroplast. The chain is Small ribosomal subunit protein uS15c (rps15) from Atropa belladonna (Belladonna).